The sequence spans 473 residues: Hyaluronidase-2 (473 aa).

A signal peptide spans 1–20 (MRAGLGPIITLALVLEVAWA). 2 cysteine pairs are disulfide-bonded: C47–C340 and C211–C227. 2 N-linked (GlcNAc...) asparagine glycosylation sites follow: N74 and N103. E135 acts as the Proton donor in catalysis. An N-linked (GlcNAc...) asparagine glycan is attached at N357. An EGF-like domain is found at 361-439 (ATQYCSWTQC…YLGWGGEQCQ (79 aa)). Intrachain disulfides connect C365–C376, C370–C427, and C429–C438. The GPI-anchor amidated aspartate moiety is linked to residue D448. Residues 449–473 (ASRAWAGAHLASLLGLVAMTLTWTL) constitute a propeptide, removed in mature form.

Belongs to the glycosyl hydrolase 56 family. Interacts with MST1R.

Its subcellular location is the cell membrane. The enzyme catalyses Random hydrolysis of (1-&gt;4)-linkages between N-acetyl-beta-D-glucosamine and D-glucuronate residues in hyaluronate.. Its function is as follows. Catalyzes hyaluronan degradation into small fragments that are endocytosed and degraded in lysosomes by HYAL1 and exoglycosidases. Essential for the breakdown of extracellular matrix hyaluronan. In Rattus norvegicus (Rat), this protein is Hyaluronidase-2 (Hyal2).